The sequence spans 413 residues: Serine hydroxymethyltransferase (413 aa).

(6S)-5,6,7,8-tetrahydrofolate-binding positions include Leu119 and 123–125; that span reads GHL. Lys228 carries the N6-(pyridoxal phosphate)lysine modification. 351–353 serves as a coordination point for (6S)-5,6,7,8-tetrahydrofolate; the sequence is SPF.

The protein belongs to the SHMT family. As to quaternary structure, homodimer. Pyridoxal 5'-phosphate is required as a cofactor.

The protein localises to the cytoplasm. The catalysed reaction is (6R)-5,10-methylene-5,6,7,8-tetrahydrofolate + glycine + H2O = (6S)-5,6,7,8-tetrahydrofolate + L-serine. It participates in one-carbon metabolism; tetrahydrofolate interconversion. The protein operates within amino-acid biosynthesis; glycine biosynthesis; glycine from L-serine: step 1/1. Functionally, catalyzes the reversible interconversion of serine and glycine with tetrahydrofolate (THF) serving as the one-carbon carrier. This reaction serves as the major source of one-carbon groups required for the biosynthesis of purines, thymidylate, methionine, and other important biomolecules. Also exhibits THF-independent aldolase activity toward beta-hydroxyamino acids, producing glycine and aldehydes, via a retro-aldol mechanism. This Clostridium botulinum (strain Okra / Type B1) protein is Serine hydroxymethyltransferase.